The primary structure comprises 354 residues: Inactive ADP-ribosyltransferase ARH2 (354 aa).

S27 bears the Phosphoserine mark.

The protein belongs to the ADP-ribosylglycohydrolase family.

The protein localises to the cytoplasm. Its subcellular location is the myofibril. It is found in the sarcomere. Its function is as follows. Required for myofibril assembly and outgrowth of the cardiac chambers in the developing heart. Appears to be catalytically inactive, showing no activity against O-acetyl-ADP-ribose. The sequence is that of Inactive ADP-ribosyltransferase ARH2 (ADPRHL1) from Bos taurus (Bovine).